The following is a 297-amino-acid chain: METAQQLDKPALDTNDAARDKAINEQVTMTQDTPYPDQTVGNPFVDDPKMRLRDVEVFYDDNQAIHGVSLDIGKNEVVSLIGPSGCGKSTFLRCLNRMNDTIDICKVKGSLHLESQDLYDPKLDVVELRARVGMVFQKPNPFPKSIYDNVAYGPRIHGLANKKYDLDEIVETSLRKAGLWEEVKDRLHAPGTGLSGGQQQRLCIARTIAVSPEVVLMDEPCSALDPIATAKIEELISELSESYTIAIVTHSMQQAARVSSRTAYFHLGRLVEMNDTETVFTKPEHDLTEAYITGRFG.

An ABC transporter domain is found at 50-292; sequence MRLRDVEVFY…PEHDLTEAYI (243 aa). An ATP-binding site is contributed by 82 to 89; the sequence is GPSGCGKS.

This sequence belongs to the ABC transporter superfamily. Phosphate importer (TC 3.A.1.7) family. In terms of assembly, the complex is composed of two ATP-binding proteins (PstB), two transmembrane proteins (PstC and PstA) and a solute-binding protein (PstS).

It is found in the cell inner membrane. It carries out the reaction phosphate(out) + ATP + H2O = ADP + 2 phosphate(in) + H(+). In terms of biological role, part of the ABC transporter complex PstSACB involved in phosphate import. Responsible for energy coupling to the transport system. This chain is Phosphate import ATP-binding protein PstB, found in Alcanivorax borkumensis (strain ATCC 700651 / DSM 11573 / NCIMB 13689 / SK2).